The following is a 421-amino-acid chain: UDP-N-acetylglucosamine 1-carboxyvinyltransferase (421 aa).

Lys-22–Asn-23 is a binding site for phosphoenolpyruvate. UDP-N-acetyl-alpha-D-glucosamine is bound at residue Arg-93. The active-site Proton donor is the Cys-117. Cys-117 carries the 2-(S-cysteinyl)pyruvic acid O-phosphothioketal modification. UDP-N-acetyl-alpha-D-glucosamine-binding positions include Arg-122–Leu-126, Asp-308, and Leu-330.

It belongs to the EPSP synthase family. MurA subfamily.

The protein localises to the cytoplasm. It catalyses the reaction phosphoenolpyruvate + UDP-N-acetyl-alpha-D-glucosamine = UDP-N-acetyl-3-O-(1-carboxyvinyl)-alpha-D-glucosamine + phosphate. It participates in cell wall biogenesis; peptidoglycan biosynthesis. Its function is as follows. Cell wall formation. Adds enolpyruvyl to UDP-N-acetylglucosamine. In Helicobacter hepaticus (strain ATCC 51449 / 3B1), this protein is UDP-N-acetylglucosamine 1-carboxyvinyltransferase.